The sequence spans 228 residues: Translin (228 aa).

A DNA/RNA binding region spans residues 86-90 (RFHEH). The leucine-zipper stretch occupies residues 177-198 (LDSGFRLLNLKNDSLRKRYDGL). Lys-187 bears the N6-acetyllysine mark. Position 190 is a phosphoserine (Ser-190). N6-acetyllysine is present on Lys-199.

Belongs to the translin family. In terms of assembly, ring-shaped heterooctamer of six TSN and two TSNAX subunits, DNA/RNA binding occurs inside the ring.

The protein localises to the cytoplasm. It is found in the nucleus. In terms of biological role, DNA-binding protein that specifically recognizes consensus sequences at the breakpoint junctions in chromosomal translocations, mostly involving immunoglobulin (Ig)/T-cell receptor gene segments. Seems to recognize single-stranded DNA ends generated by staggered breaks occurring at recombination hot spots. Functionally, exhibits both single-stranded and double-stranded endoribonuclease activity. May act as an activator of RNA-induced silencing complex (RISC) by facilitating endonucleolytic cleavage of the siRNA passenger strand. The sequence is that of Translin (TSN) from Bos taurus (Bovine).